The primary structure comprises 231 residues: Sporulation protein RMD6 (231 aa).

It localises to the peroxisome. Required for sporulation. Required for meiotic nuclear division. This chain is Sporulation protein RMD6 (RMD6), found in Saccharomyces cerevisiae (strain ATCC 204508 / S288c) (Baker's yeast).